Consider the following 1382-residue polypeptide: MLNSLKSGNRLRVDFAKNPQKIEIPNLLQLQQTSYDTFLMIGQEDRTTAGIEKVFKSIFPIHDVQNRLTLDYLGSEVGKPKYDVRESMVRGLTYSIPLKINIRLTLWDLDEKTGEKIGVKDMKEQSLFIREIPLMTDRTSFIVNGVERVVVNQLHRSPGVIFKEEESNTADNKLIYTGQIIPDRGSWLYFEYDSKDVLYVRINKRRKVPVTILFRALGYSKEDIIKLFYPIVNIKIKNNKFLTEFNPDDFMGRIEFDVKDDKGNLVIGAGKRLTARKAKALIEGGLKLIEYPLELLMDRSTANTIYDPESGEVLFDALTNLDELKLKKLLDLGFESFDIANDLAVGIDASIINAFKADAESLKLLKQTEQIDDENDLAAIRIYKVMRPGEPVTKEAAKDFVKKLFFDPERYDLTKVGRMKMNHKLGVNVPEYVTTLTYEDVIKTVQYLVKVKSGHGHIDDRDHLGNRRIRAIGELLANELHAGLIKMQKAIRDKMTTLSGTLEDLMPHDLVNSKMITSTITEFFTSGQLSQFMDQTNPLSEVTHKRRLSALGEGGLVKERAGFEVRDVHPTHYGRICPVETPEGQNIGLINTLSTFSKVNDLGFIEAPYKKVVDGVVTNEISYYTATQEEGLVIAPGSTKVDENGKIIEPLIEVRKNGEILLMERNSVDLIDISSQMVMGVAASLIPFLEHDDANRALMGSNMMRQAVPLLRPSAPVVGTGLEKIVARDAWEAIKANRAGLVEKADAKNIYIRGEDENGAFIDHYTVNKNVRTNNNTSFGQRIAVKEGDFVQKGQVIADGPSMDKGELAVGINAMVAFMPWNGYNYEDAIILSERLIEEDAFTSVHIYEKEIECRELKHGNEEITRDLPGVKEESISHLDNSGIVKVGTYVTPGMILVGKVTPKGEIKPTPEERLLRAIFGEKAGHVINKSLVCPTSMEGTVVDVKVFTKKGYEKDDRAVAEIESEKAELDLKHHDKLLMLDREEILKINDLLLKATLTKDVELDDVVYKKGETIPVDVLNNVNRFAMKKVVSSYSKEIEKAYNDIKEYFIKQKAHLREEHEEKLQILEHDDILSSGVIKQVKVYIATKRKIKVGDKMAGRHGNKGIVSNIVPKVDMPYLEDGTTVDVILNPLGVPSRMNIGQILEVHLGLAGKKLGNQIQDIFEAKRADFIAELRAKMTEIASVAKLMNGKAFMDSLNDEELVQYAQDWAKGVRFATQIFDGVKAEEFAKLFELAKIDSDGKCVLFDGKTGEKMKERVNVGYMYMLKLHHLVDEKVHARSTGPYSLVTQQPVGGKALFGGQRFGEMEVWALEAYGATNVLKEMLTTKSDDVEGRTKAYRAIANGENVPNSGVPETFFVLTKELKALALDVEIFGEVENNEQ.

The protein belongs to the RNA polymerase beta chain family. In terms of assembly, the RNAP catalytic core consists of 2 alpha, 1 beta, 1 beta' and 1 omega subunit. When a sigma factor is associated with the core the holoenzyme is formed, which can initiate transcription.

The enzyme catalyses RNA(n) + a ribonucleoside 5'-triphosphate = RNA(n+1) + diphosphate. Its function is as follows. DNA-dependent RNA polymerase catalyzes the transcription of DNA into RNA using the four ribonucleoside triphosphates as substrates. This is DNA-directed RNA polymerase subunit beta from Aliarcobacter butzleri (strain RM4018) (Arcobacter butzleri).